The following is a 356-amino-acid chain: MSDDLETLRQETLAALAAATDRREWDAVRVGTLGKSGRLTALLKELGRMTPEARKLRGAAVNRLRDDLTREIEARGAEIESAILNARLAAERVDVTLPVRPESSGAIHPISRTMEEMAAIFGAMGFKVAEGPDIETDWHNFSALNTPDHHPARTDQDTFYLPAREGTSQERVLRTQTSGVQIRTMLGEEPPIRIIAPGRTYRADHDATHSPMFHQCEGLVIDRGITLAHLKGCLTDFLRAYFGNPDLPVRFRASYFPFTEPSMEVDIGWSRKSGEIGGGDDWLEVLGSGMVHPRVLANCGLDPREWQGFAFGMGIERLTMLRHGIPDLRSFYESDVRWLRHYGASPLSPALLHEGL.

Residue E260 participates in Mg(2+) binding.

Belongs to the class-II aminoacyl-tRNA synthetase family. Phe-tRNA synthetase alpha subunit type 1 subfamily. In terms of assembly, tetramer of two alpha and two beta subunits. Requires Mg(2+) as cofactor.

The protein localises to the cytoplasm. The enzyme catalyses tRNA(Phe) + L-phenylalanine + ATP = L-phenylalanyl-tRNA(Phe) + AMP + diphosphate + H(+). This chain is Phenylalanine--tRNA ligase alpha subunit, found in Gluconacetobacter diazotrophicus (strain ATCC 49037 / DSM 5601 / CCUG 37298 / CIP 103539 / LMG 7603 / PAl5).